Here is a 334-residue protein sequence, read N- to C-terminus: Transaldolase (334 aa).

The Schiff-base intermediate with substrate role is filled by Lys136.

The protein belongs to the transaldolase family. Type 1 subfamily. In terms of assembly, homodimer.

The protein resides in the cytoplasm. It catalyses the reaction D-sedoheptulose 7-phosphate + D-glyceraldehyde 3-phosphate = D-erythrose 4-phosphate + beta-D-fructose 6-phosphate. Its pathway is carbohydrate degradation; pentose phosphate pathway; D-glyceraldehyde 3-phosphate and beta-D-fructose 6-phosphate from D-ribose 5-phosphate and D-xylulose 5-phosphate (non-oxidative stage): step 2/3. In terms of biological role, transaldolase is important for the balance of metabolites in the pentose-phosphate pathway. The sequence is that of Transaldolase from Nostoc punctiforme (strain ATCC 29133 / PCC 73102).